The sequence spans 471 residues: ATP synthase subunit beta (471 aa).

156–163 (GGAGVGKT) is a binding site for ATP.

It belongs to the ATPase alpha/beta chains family. As to quaternary structure, F-type ATPases have 2 components, CF(1) - the catalytic core - and CF(0) - the membrane proton channel. CF(1) has five subunits: alpha(3), beta(3), gamma(1), delta(1), epsilon(1). CF(0) has three main subunits: a(1), b(2) and c(9-12). The alpha and beta chains form an alternating ring which encloses part of the gamma chain. CF(1) is attached to CF(0) by a central stalk formed by the gamma and epsilon chains, while a peripheral stalk is formed by the delta and b chains.

Its subcellular location is the cell inner membrane. It catalyses the reaction ATP + H2O + 4 H(+)(in) = ADP + phosphate + 5 H(+)(out). Produces ATP from ADP in the presence of a proton gradient across the membrane. The catalytic sites are hosted primarily by the beta subunits. The sequence is that of ATP synthase subunit beta from Nitratidesulfovibrio vulgaris (strain DSM 19637 / Miyazaki F) (Desulfovibrio vulgaris).